Consider the following 656-residue polypeptide: 1-deoxy-D-xylulose-5-phosphate synthase 1 (656 aa).

Residues His73 and 113–115 contribute to the thiamine diphosphate site; that span reads SHA. Mg(2+) is bound at residue Asp144. Thiamine diphosphate-binding positions include 145 to 146, Asn174, Tyr285, and Glu367; that span reads GA. Residue Asn174 coordinates Mg(2+). Residues 625-656 are disordered; sequence AGDRAGGPAVEQPGDGRMSGDGRIVMPAQGEN.

This sequence belongs to the transketolase family. DXPS subfamily. In terms of assembly, homodimer. Mg(2+) serves as cofactor. It depends on thiamine diphosphate as a cofactor.

The catalysed reaction is D-glyceraldehyde 3-phosphate + pyruvate + H(+) = 1-deoxy-D-xylulose 5-phosphate + CO2. It functions in the pathway metabolic intermediate biosynthesis; 1-deoxy-D-xylulose 5-phosphate biosynthesis; 1-deoxy-D-xylulose 5-phosphate from D-glyceraldehyde 3-phosphate and pyruvate: step 1/1. Its function is as follows. Catalyzes the acyloin condensation reaction between C atoms 2 and 3 of pyruvate and glyceraldehyde 3-phosphate to yield 1-deoxy-D-xylulose-5-phosphate (DXP). The polypeptide is 1-deoxy-D-xylulose-5-phosphate synthase 1 (Streptomyces coelicolor (strain ATCC BAA-471 / A3(2) / M145)).